A 197-amino-acid chain; its full sequence is Imidazoleglycerol-phosphate dehydratase (197 aa).

This sequence belongs to the imidazoleglycerol-phosphate dehydratase family.

It is found in the cytoplasm. The enzyme catalyses D-erythro-1-(imidazol-4-yl)glycerol 3-phosphate = 3-(imidazol-4-yl)-2-oxopropyl phosphate + H2O. It functions in the pathway amino-acid biosynthesis; L-histidine biosynthesis; L-histidine from 5-phospho-alpha-D-ribose 1-diphosphate: step 6/9. This Pseudomonas syringae pv. syringae (strain B728a) protein is Imidazoleglycerol-phosphate dehydratase.